The sequence spans 593 residues: Glyoxylate carboligase (593 aa).

Belongs to the TPP enzyme family. In terms of assembly, homotetramer. It depends on Mg(2+) as a cofactor. Requires thiamine diphosphate as cofactor.

It catalyses the reaction 2 glyoxylate + H(+) = 2-hydroxy-3-oxopropanoate + CO2. It functions in the pathway organic acid metabolism; glycolate degradation; 3-phospho-D-glycerate from glycolate: step 2/4. Catalyzes the condensation of two molecules of glyoxylate to give 2-hydroxy-3-oxopropanoate (also termed tartronate semialdehyde). This is Glyoxylate carboligase (gcl) from Escherichia coli O157:H7.